A 314-amino-acid chain; its full sequence is Acetyl-coenzyme A carboxylase carboxyl transferase subunit beta (314 aa).

Residues Leu37–Tyr307 form the CoA carboxyltransferase N-terminal domain. Positions 41, 44, 60, and 63 each coordinate Zn(2+). Residues Cys41–Cys63 form a C4-type zinc finger.

This sequence belongs to the AccD/PCCB family. In terms of assembly, acetyl-CoA carboxylase is a heterohexamer composed of biotin carboxyl carrier protein (AccB), biotin carboxylase (AccC) and two subunits each of ACCase subunit alpha (AccA) and ACCase subunit beta (AccD). Zn(2+) is required as a cofactor.

It is found in the cytoplasm. It catalyses the reaction N(6)-carboxybiotinyl-L-lysyl-[protein] + acetyl-CoA = N(6)-biotinyl-L-lysyl-[protein] + malonyl-CoA. It participates in lipid metabolism; malonyl-CoA biosynthesis; malonyl-CoA from acetyl-CoA: step 1/1. In terms of biological role, component of the acetyl coenzyme A carboxylase (ACC) complex. Biotin carboxylase (BC) catalyzes the carboxylation of biotin on its carrier protein (BCCP) and then the CO(2) group is transferred by the transcarboxylase to acetyl-CoA to form malonyl-CoA. This chain is Acetyl-coenzyme A carboxylase carboxyl transferase subunit beta, found in Synechococcus sp. (strain JA-3-3Ab) (Cyanobacteria bacterium Yellowstone A-Prime).